The chain runs to 226 residues: Octanoyltransferase (226 aa).

The BPL/LPL catalytic domain maps to 31 to 226 (PETPDALWIC…SQKLGTYLAP (196 aa)). Residues 70 to 77 (RGGQVTFH), 159 to 161 (ALG), and 172 to 174 (GVA) each bind substrate. Catalysis depends on Cys-190, which acts as the Acyl-thioester intermediate.

The protein belongs to the LipB family.

It localises to the cytoplasm. It catalyses the reaction octanoyl-[ACP] + L-lysyl-[protein] = N(6)-octanoyl-L-lysyl-[protein] + holo-[ACP] + H(+). It functions in the pathway protein modification; protein lipoylation via endogenous pathway; protein N(6)-(lipoyl)lysine from octanoyl-[acyl-carrier-protein]: step 1/2. Catalyzes the transfer of endogenously produced octanoic acid from octanoyl-acyl-carrier-protein onto the lipoyl domains of lipoate-dependent enzymes. Lipoyl-ACP can also act as a substrate although octanoyl-ACP is likely to be the physiological substrate. This Variovorax paradoxus (strain S110) protein is Octanoyltransferase.